Reading from the N-terminus, the 681-residue chain is Proline dehydrogenase 1, mitochondrial (681 aa).

Residues 1-30 constitute a mitochondrion transit peptide; the sequence is MALLRSLSAQRTAISLVYGRNSSKSSNSVA. Residues 76 to 87 show a composition bias toward polar residues; it reads STLVQPEVVSSE. Disordered regions lie at residues 76–113 and 216–239; these read STLV…QRDP and EEAE…EGSM. A compositionally biased stretch (basic and acidic residues) spans 88 to 99; it reads TVKRSMKQESSQ.

Belongs to the proline oxidase family. FAD is required as a cofactor. As to expression, most abundant in developing nervous system.

It is found in the mitochondrion matrix. It carries out the reaction L-proline + a quinone = (S)-1-pyrroline-5-carboxylate + a quinol + H(+). Its pathway is amino-acid degradation; L-proline degradation into L-glutamate; L-glutamate from L-proline: step 1/2. Functionally, converts proline to delta-1-pyrroline-5-carboxylate. Involved in the conversion of proline to glutamate, which functions as a transmitter at neuromuscular junctions. Glutamate deficiency could possibly account for reduced motor activity. This Drosophila melanogaster (Fruit fly) protein is Proline dehydrogenase 1, mitochondrial (slgA).